The sequence spans 128 residues: Small ribosomal subunit protein uS11 (128 aa).

This sequence belongs to the universal ribosomal protein uS11 family. Part of the 30S ribosomal subunit. Interacts with proteins S7 and S18. Binds to IF-3.

Located on the platform of the 30S subunit, it bridges several disparate RNA helices of the 16S rRNA. Forms part of the Shine-Dalgarno cleft in the 70S ribosome. This is Small ribosomal subunit protein uS11 from Vesicomyosocius okutanii subsp. Calyptogena okutanii (strain HA).